The sequence spans 446 residues: Dual specificity mitogen-activated protein kinase kinase 2 (446 aa).

Over residues 27–42 (SSGSSAGLGFQGQSQQ) the composition is skewed to low complexity. The disordered stretch occupies residues 27–51 (SSGSSAGLGFQGQSQQHSTVNSMQG). The region spanning 149–414 (LKDLGEIGRG…YKELLKHPFI (266 aa)) is the Protein kinase domain. ATP contacts are provided by residues 155–163 (IGRGAYGSV) and K178. The active-site Proton acceptor is D276. S304 bears the Phosphoserine; by RAF mark. T308 is modified (phosphothreonine; by RAF).

The protein belongs to the protein kinase superfamily. STE Ser/Thr protein kinase family. MAP kinase kinase subfamily. Post-translationally, MAPKK is itself dependent on Ser/Thr phosphorylation for activity catalyzed by MAP kinase kinase kinases. As to expression, expressed abundantly in the adult brain and muscle.

The enzyme catalyses L-seryl-[protein] + ATP = O-phospho-L-seryl-[protein] + ADP + H(+). The catalysed reaction is L-threonyl-[protein] + ATP = O-phospho-L-threonyl-[protein] + ADP + H(+). It catalyses the reaction L-tyrosyl-[protein] + ATP = O-phospho-L-tyrosyl-[protein] + ADP + H(+). In terms of biological role, catalyzes the concomitant phosphorylation of a threonine and a tyrosine residue in a Thr-Glu-Tyr sequence located in MAP kinases. This is Dual specificity mitogen-activated protein kinase kinase 2 (map2k2) from Xenopus laevis (African clawed frog).